Here is a 51-residue protein sequence, read N- to C-terminus: Ribosome biogenesis protein Nop10 (51 aa).

It belongs to the NOP10 family.

In terms of biological role, involved in ribosome biogenesis; more specifically in 18S rRNA pseudouridylation and in cleavage of pre-rRNA. The chain is Ribosome biogenesis protein Nop10 from Methanosarcina barkeri (strain Fusaro / DSM 804).